The chain runs to 248 residues: DCN1-like protein 4 (248 aa).

The interval 1–35 is disordered; it reads MPRGKRRAADTISDNMDHGQPKRARTSYTSIPTQQ. Over residues 26-35 the composition is skewed to polar residues; that stretch reads TSYTSIPTQQ. Residues 47 to 235 form the DCUN1 domain; the sequence is FSQKRCMAWF…MLDEFVEWLR (189 aa).

The protein localises to the nucleus. Functionally, inhibits neddylation of cullin components of SCF-type E3 ubiquitin ligase complexes and thus regulates SCF-type complex activity. Essential for development. Function inhibits cell proliferation and cell growth. The protein is DCN1-like protein 4 of Drosophila melanogaster (Fruit fly).